The chain runs to 273 residues: Undecaprenyl-diphosphatase (273 aa).

A run of 8 helical transmembrane segments spans residues 18–40 (GLTEFLPVSSTGHMILVGSLLGF), 45–65 (AKTFEVIIQLGSILAVVVVFW), 92–112 (GHILLGMIPAVVLGLVFHEQI), 114–134 (AIFAPIYVMYALVVGGVLLLA), 151–171 (LTYLQAFLIGCFQCLALWPGF), 189–209 (YAASEFSFILAVPMMLGATVL), 225–245 (MFAIGFVTAFVVALLAIKFFL), and 253–273 (FVPFAIYRFILAVVVYWILIG).

It belongs to the UppP family.

The protein localises to the cell inner membrane. It carries out the reaction di-trans,octa-cis-undecaprenyl diphosphate + H2O = di-trans,octa-cis-undecaprenyl phosphate + phosphate + H(+). In terms of biological role, catalyzes the dephosphorylation of undecaprenyl diphosphate (UPP). Confers resistance to bacitracin. The sequence is that of Undecaprenyl-diphosphatase from Sodalis glossinidius (strain morsitans).